Reading from the N-terminus, the 782-residue chain is Endonuclease MutS2 (782 aa).

Residue 336 to 343 (GPNTGGKT) participates in ATP binding. The region spanning 707 to 782 (LDLRGYRYEE…GFGVTVAELK (76 aa)) is the Smr domain.

It belongs to the DNA mismatch repair MutS family. MutS2 subfamily. Homodimer. Binds to stalled ribosomes, contacting rRNA.

In terms of biological role, endonuclease that is involved in the suppression of homologous recombination and thus may have a key role in the control of bacterial genetic diversity. Functionally, acts as a ribosome collision sensor, splitting the ribosome into its 2 subunits. Detects stalled/collided 70S ribosomes which it binds and splits by an ATP-hydrolysis driven conformational change. Acts upstream of the ribosome quality control system (RQC), a ribosome-associated complex that mediates the extraction of incompletely synthesized nascent chains from stalled ribosomes and their subsequent degradation. Probably generates substrates for RQC. In Staphylococcus epidermidis (strain ATCC 12228 / FDA PCI 1200), this protein is Endonuclease MutS2.